A 131-amino-acid polypeptide reads, in one-letter code: Photosystem II reaction center Psb28 protein (131 aa).

Residues 110–131 (NGLGYSQNQKSDQTDAATEEQA) form a disordered region. Polar residues predominate over residues 112–125 (LGYSQNQKSDQTDA).

It belongs to the Psb28 family. In terms of assembly, part of the photosystem II complex.

Its subcellular location is the cellular thylakoid membrane. This is Photosystem II reaction center Psb28 protein from Synechococcus sp. (strain CC9902).